A 207-amino-acid chain; its full sequence is Large ribosomal subunit protein uL4 (207 aa).

The interval 44–76 (RRQGTQSTKTKSEVRGGGKKPWRQKGTGRARQG) is disordered. Residues 60 to 71 (GGKKPWRQKGTG) are compositionally biased toward basic residues.

It belongs to the universal ribosomal protein uL4 family. Part of the 50S ribosomal subunit.

Its function is as follows. One of the primary rRNA binding proteins, this protein initially binds near the 5'-end of the 23S rRNA. It is important during the early stages of 50S assembly. It makes multiple contacts with different domains of the 23S rRNA in the assembled 50S subunit and ribosome. In terms of biological role, forms part of the polypeptide exit tunnel. The chain is Large ribosomal subunit protein uL4 from Ruminiclostridium cellulolyticum (strain ATCC 35319 / DSM 5812 / JCM 6584 / H10) (Clostridium cellulolyticum).